We begin with the raw amino-acid sequence, 292 residues long: NAD kinase (292 aa).

Asp-73 functions as the Proton acceptor in the catalytic mechanism. Residues 73–74, 147–148, His-158, Arg-175, Asp-177, 188–193, and Gln-247 contribute to the NAD(+) site; these read DG, NE, and TAYSLS.

Belongs to the NAD kinase family. The cofactor is a divalent metal cation.

It is found in the cytoplasm. The catalysed reaction is NAD(+) + ATP = ADP + NADP(+) + H(+). Functionally, involved in the regulation of the intracellular balance of NAD and NADP, and is a key enzyme in the biosynthesis of NADP. Catalyzes specifically the phosphorylation on 2'-hydroxyl of the adenosine moiety of NAD to yield NADP. The polypeptide is NAD kinase (Salmonella agona (strain SL483)).